Consider the following 451-residue polypeptide: Gamma-aminobutyric acid receptor subunit alpha-2 (451 aa).

The first 28 residues, 1–28 (MKTKLNSSNMQLLLFVFLAWDPARLVLA), serve as a signal peptide directing secretion. At 29–249 (NIQEDEAKNN…MTAHFHLKRK (221 aa)) the chain is on the extracellular side. Residue N38 is glycosylated (N-linked (GlcNAc...) asparagine). R94 provides a ligand contact to 4-aminobutanoate. An N-linked (GlcNAc...) asparagine glycan is attached at N138. T157 serves as a coordination point for 4-aminobutanoate. An intrachain disulfide couples C166 to C180. Residue N201 is glycosylated (N-linked (GlcNAc...) asparagine). Residues 250–270 (IGYFVIQTYLPCIMTVILSQV) traverse the membrane as a helical segment. The Cytoplasmic segment spans residues 271-280 (SFWLNRESVP). Residues 281–300 (ARTVFGVTTVLTMTTLSISA) form a helical membrane-spanning segment. The Extracellular portion of the chain corresponds to 301–311 (RNSLPKVAYAT). Residues 312–332 (AMDWFIAVCYAFVFSALIEFA) form a helical membrane-spanning segment. Residues 333 to 420 (TVNYFTKRGW…FNSVSKIDRM (88 aa)) are Cytoplasmic-facing. Residues 421–441 (SRIVFPVLFGTFNLVYWATYL) traverse the membrane as a helical segment. Residues 442–451 (NREPVLGVSP) are Extracellular-facing.

It belongs to the ligand-gated ion channel (TC 1.A.9) family. Gamma-aminobutyric acid receptor (TC 1.A.9.5) subfamily. GABRA2 sub-subfamily. In terms of assembly, heteropentamer, formed by a combination of alpha (GABRA1-6), beta (GABRB1-3), gamma (GABRG1-3), delta (GABRD), epsilon (GABRE), rho (GABRR1-3), pi (GABRP) and theta (GABRQ) subunits, each subunit exhibiting distinct physiological and pharmacological properties. Interacts with UBQLN1. Interacts with KIF21B. Interacts with LHFPL4. Interacts with SHISA7; interaction leads to the regulation of GABA(A) receptor trafficking, channel deactivation kinetics and pharmacology. Glycosylated.

Its subcellular location is the postsynaptic cell membrane. It is found in the cell membrane. The protein resides in the cytoplasmic vesicle membrane. It localises to the cell projection. The protein localises to the dendrite. The enzyme catalyses chloride(in) = chloride(out). Activated by pentobarbital. Inhibited by the antagonist bicuculline. Alpha subunit of the heteropentameric ligand-gated chloride channel gated by gamma-aminobutyric acid (GABA), a major inhibitory neurotransmitter in the brain. GABA-gated chloride channels, also named GABA(A) receptors (GABAAR), consist of five subunits arranged around a central pore and contain GABA active binding site(s) located at the alpha and beta subunit interface(s). When activated by GABA, GABAARs selectively allow the flow of chloride anions across the cell membrane down their electrochemical gradient. Chloride influx into the postsynaptic neuron following GABAAR opening decreases the neuron ability to generate a new action potential, thereby reducing nerve transmission. The alpha-2 subunit exhibits synaptogenic activity together with beta-2 and very little to no activity together with beta-3, the gamma-2 subunit being necessary but not sufficient to induce rapid synaptic contacts formation. The sequence is that of Gamma-aminobutyric acid receptor subunit alpha-2 (GABRA2) from Bos taurus (Bovine).